The sequence spans 152 residues: UPF0178 protein SaurJH9_0705 (152 aa).

Belongs to the UPF0178 family.

The polypeptide is UPF0178 protein SaurJH9_0705 (Staphylococcus aureus (strain JH9)).